Consider the following 551-residue polypeptide: HTH-type transcriptional regulator SgrR (551 aa).

Residues 1–116 (MPSARLQQQF…LVSHLGRSFR (116 aa)) enclose the HTH marR-type domain. The segment at residues 26-49 (LNELAALLSCSRRHMRTLLNTMQD) is a DNA-binding region (H-T-H motif). Positions 163-492 (ELEADIAHHW…IDWQADAARW (330 aa)) are solute-binding.

Functionally, activates the small RNA gene sgrS under glucose-phosphate stress conditions as well as yfdZ. Represses its own transcription under both stress and non-stress conditions. Might act as a sensor of the intracellular accumulation of phosphoglucose by binding these molecules in its C-terminal solute-binding domain. The protein is HTH-type transcriptional regulator SgrR of Shigella sonnei (strain Ss046).